Here is a 320-residue protein sequence, read N- to C-terminus: Zinc finger protein 330 (320 aa).

Residues methionine 1 to arginine 23 form a disordered region. The Nuclear localization signal signature appears at lysine 3–lysine 11. A compositionally biased stretch (basic and acidic residues) spans lysine 10–leucine 22. C4-type zinc fingers lie at residues cysteine 42–cysteine 58, cysteine 67–cysteine 104, cysteine 129–cysteine 149, and cysteine 175–cysteine 189. The interval glutamate 206–asparagine 320 is disordered. Residues cysteine 216–aspartate 225 show a composition bias toward basic and acidic residues. The segment covering aspartate 269–aspartate 285 has biased composition (acidic residues). Serine 291 bears the Phosphoserine mark.

This sequence belongs to the NOA36 family. As to expression, widely expressed. Higher expression seen in heart and skeletal muscle.

It localises to the nucleus. The protein localises to the nucleolus. The protein resides in the chromosome. Its subcellular location is the centromere. This is Zinc finger protein 330 (ZNF330) from Homo sapiens (Human).